A 270-amino-acid chain; its full sequence is Glucosamine-6-phosphate deaminase (270 aa).

D72 functions as the Proton acceptor; for enolization step in the catalytic mechanism. The For ring-opening step role is filled by D141. H143 acts as the Proton acceptor; for ring-opening step in catalysis. E148 functions as the For ring-opening step in the catalytic mechanism.

It belongs to the glucosamine/galactosamine-6-phosphate isomerase family. NagB subfamily. In terms of assembly, homohexamer.

It carries out the reaction alpha-D-glucosamine 6-phosphate + H2O = beta-D-fructose 6-phosphate + NH4(+). The protein operates within amino-sugar metabolism; N-acetylneuraminate degradation; D-fructose 6-phosphate from N-acetylneuraminate: step 5/5. With respect to regulation, allosterically activated by N-acetylglucosamine 6-phosphate (GlcNAc6P). In terms of biological role, catalyzes the reversible isomerization-deamination of glucosamine 6-phosphate (GlcN6P) to form fructose 6-phosphate (Fru6P) and ammonium ion. In Photorhabdus laumondii subsp. laumondii (strain DSM 15139 / CIP 105565 / TT01) (Photorhabdus luminescens subsp. laumondii), this protein is Glucosamine-6-phosphate deaminase.